A 414-amino-acid chain; its full sequence is Procollagen C-endopeptidase enhancer 2 (414 aa).

An N-terminal signal peptide occupies residues 1–22 (MGGASACIPLCLLLATARMARP). 7 cysteine pairs are disulfide-bonded: Cys-32/Cys-58, Cys-85/Cys-106, Cys-153/Cys-180, Cys-207/Cys-230, Cys-296/Cys-363, Cys-300/Cys-366, and Cys-311/Cys-414. CUB domains follow at residues 32-143 (CGGI…YSAA) and 153-267 (CGGR…YKFR). An NTR domain is found at 296–414 (CQQKCRRMGT…PMNALKNKQC (119 aa)). Asn-354 is a glycosylation site (N-linked (GlcNAc...) asparagine).

In terms of assembly, interacts with heparin with high affinity, and type I or II collagen. O-glycosylated; contains sialic acid.

Its subcellular location is the secreted. In terms of biological role, binds to the C-terminal propeptide of types I and II procollagens and may enhance the cleavage of that propeptide by BMP1. This is Procollagen C-endopeptidase enhancer 2 (Pcolce2) from Mus musculus (Mouse).